A 126-amino-acid polypeptide reads, in one-letter code: MPEPSKSAPAPKKGSKKAVTKAQKKDGKKRKRSRKESYSVYVYKVLKQVHPDTGISSKAMGIMNSFVNDIFERIAGEASRLAHYNKRSTITSREIQTAVRLLLPGELAKHAVSEGTKAVTKYTSSK.

Positions 1-12 are enriched in low complexity; that stretch reads MPEPSKSAPAPK. Residues 1 to 36 form a disordered region; it reads MPEPSKSAPAPKKGSKKAVTKAQKKDGKKRKRSRKE. Proline 2 bears the N-acetylproline mark. ADP-ribosyl glutamic acid is present on glutamate 3. The residue at position 6 (lysine 6) is an N6-(2-hydroxyisobutyryl)lysine; alternate. The residue at position 6 (lysine 6) is an N6-(beta-hydroxybutyryl)lysine; alternate. At lysine 6 the chain carries N6-acetyllysine; alternate. Residue lysine 6 is modified to N6-butyryllysine; alternate. An N6-crotonyllysine; alternate modification is found at lysine 6. Lysine 6 carries the post-translational modification N6-lactoyllysine; alternate. A Glycyl lysine isopeptide (Lys-Gly) (interchain with G-Cter in SUMO2); alternate cross-link involves residue lysine 6. An ADP-ribosylserine modification is found at serine 7. Position 12 is an N6-(beta-hydroxybutyryl)lysine; alternate (lysine 12). Residues lysine 12 and lysine 13 each carry the N6-acetyllysine; alternate modification. N6-crotonyllysine; alternate is present on residues lysine 12 and lysine 13. At lysine 12 the chain carries N6-lactoyllysine; alternate. At lysine 13 the chain carries N6-(2-hydroxyisobutyryl)lysine; alternate. Serine 15 bears the Phosphoserine; by STK4/MST1 mark. N6-acetyllysine; alternate is present on residues lysine 16, lysine 17, lysine 21, and lysine 24. 4 positions are modified to N6-crotonyllysine; alternate: lysine 16, lysine 17, lysine 21, and lysine 24. Lysine 16, lysine 17, lysine 21, and lysine 24 each carry N6-lactoyllysine; alternate. Residues lysine 17 and lysine 21 each carry the N6-(beta-hydroxybutyryl)lysine; alternate modification. Lysine 17 bears the N6-glutaryllysine; alternate mark. N6-(2-hydroxyisobutyryl)lysine; alternate is present on residues lysine 21 and lysine 24. Lysine 21 carries the post-translational modification N6-butyryllysine; alternate. Lysine 21 participates in a covalent cross-link: Glycyl lysine isopeptide (Lys-Gly) (interchain with G-Cter in SUMO2); alternate. An N6-(2-hydroxyisobutyryl)lysine modification is found at lysine 25. Lysine 35 carries the N6-(2-hydroxyisobutyryl)lysine; alternate modification. The residue at position 35 (lysine 35) is an N6-(beta-hydroxybutyryl)lysine; alternate. The residue at position 35 (lysine 35) is an N6-crotonyllysine; alternate. Residue lysine 35 is modified to N6-glutaryllysine; alternate. Lysine 35 is subject to N6-succinyllysine; alternate. Lysine 35 is covalently cross-linked (Glycyl lysine isopeptide (Lys-Gly) (interchain with G-Cter in ubiquitin); alternate). Glutamate 36 is subject to PolyADP-ribosyl glutamic acid. Serine 37 bears the Phosphoserine; by AMPK mark. N6-(2-hydroxyisobutyryl)lysine; alternate occurs at positions 44, 47, and 58. Lysine 44 carries the post-translational modification N6-lactoyllysine; alternate. N6-glutaryllysine; alternate is present on residues lysine 44 and lysine 47. An N6-methyllysine; alternate modification is found at lysine 47. Lysine 58 is modified (N6,N6-dimethyllysine; alternate). Arginine 80 carries the dimethylated arginine modification. Lysine 86 bears the N6-(2-hydroxyisobutyryl)lysine; alternate mark. Lysine 86 is subject to N6-(beta-hydroxybutyryl)lysine; alternate. Lysine 86 bears the N6-acetyllysine; alternate mark. Lysine 86 is subject to N6-lactoyllysine; alternate. N6,N6,N6-trimethyllysine; alternate is present on lysine 86. Omega-N-methylarginine occurs at positions 87 and 93. Lysine 109 bears the N6-(2-hydroxyisobutyryl)lysine; alternate mark. Lysine 109 carries the N6-lactoyllysine; alternate modification. Lysine 109 bears the N6-glutaryllysine; alternate mark. Lysine 109 carries the N6-methyllysine; alternate modification. Serine 113 carries an O-linked (GlcNAc) serine glycan. The residue at position 116 (threonine 116) is a Phosphothreonine. 2 positions are modified to N6-(2-hydroxyisobutyryl)lysine; alternate: lysine 117 and lysine 121. Residues lysine 117 and lysine 121 each carry the N6-(beta-hydroxybutyryl)lysine; alternate modification. Residues lysine 117 and lysine 121 each carry the N6-lactoyllysine; alternate modification. Lysine 117 and lysine 121 each carry N6-glutaryllysine; alternate. N6-succinyllysine; alternate is present on residues lysine 117 and lysine 121. Lysine 117 is modified (N6-malonyllysine; alternate). At lysine 117 the chain carries N6-methylated lysine; alternate. A Glycyl lysine isopeptide (Lys-Gly) (interchain with G-Cter in ubiquitin); alternate cross-link involves residue lysine 121.

It belongs to the histone H2B family. In terms of assembly, the nucleosome is a histone octamer containing two molecules each of H2A, H2B, H3 and H4 assembled in one H3-H4 heterotetramer and two H2A-H2B heterodimers. The octamer wraps approximately 147 bp of DNA. In terms of processing, monoubiquitination at Lys-35 (H2BK34Ub) by the MSL1/MSL2 dimer is required for histone H3 'Lys-4' (H3K4me) and 'Lys-79' (H3K79me) methylation and transcription activation at specific gene loci, such as HOXA9 and MEIS1 loci. Similarly, monoubiquitination at Lys-121 (H2BK120Ub) by the RNF20/40 complex gives a specific tag for epigenetic transcriptional activation and is also prerequisite for histone H3 'Lys-4' and 'Lys-79' methylation. It also functions cooperatively with the FACT dimer to stimulate elongation by RNA polymerase II. H2BK120Ub also acts as a regulator of mRNA splicing: deubiquitination by USP49 is required for efficient cotranscriptional splicing of a large set of exons. Post-translationally, phosphorylation at Ser-37 (H2BS36ph) by AMPK in response to stress promotes transcription. Phosphorylated on Ser-15 (H2BS14ph) by STK4/MST1 during apoptosis; which facilitates apoptotic chromatin condensation. Also phosphorylated on Ser-15 in response to DNA double strand breaks (DSBs), and in correlation with somatic hypermutation and immunoglobulin class-switch recombination. GlcNAcylation at Ser-113 promotes monoubiquitination of Lys-121. It fluctuates in response to extracellular glucose, and associates with transcribed genes. In terms of processing, ADP-ribosylated by PARP1 or PARP2 on Ser-7 (H2BS6ADPr) in response to DNA damage. H2BS6ADPr promotes recruitment of CHD1L. Mono-ADP-ribosylated on Glu-3 (H2BE2ADPr) by PARP3 in response to single-strand breaks. Poly ADP-ribosylation on Glu-36 (H2BE35ADPr) by PARP1 regulates adipogenesis: it inhibits phosphorylation at Ser-37 (H2BS36ph), thereby blocking expression of pro-adipogenetic genes. Post-translationally, crotonylation (Kcr) is specifically present in male germ cells and marks testis-specific genes in post-meiotic cells, including X-linked genes that escape sex chromosome inactivation in haploid cells. Crotonylation marks active promoters and enhancers and confers resistance to transcriptional repressors. It is also associated with post-meiotically activated genes on autosomes. Lactylated in macrophages by EP300/P300 by using lactoyl-CoA directly derived from endogenous or exogenous lactate, leading to stimulates gene transcription.

The protein localises to the nucleus. It localises to the chromosome. Its function is as follows. Core component of nucleosome. Nucleosomes wrap and compact DNA into chromatin, limiting DNA accessibility to the cellular machineries which require DNA as a template. Histones thereby play a central role in transcription regulation, DNA repair, DNA replication and chromosomal stability. DNA accessibility is regulated via a complex set of post-translational modifications of histones, also called histone code, and nucleosome remodeling. The protein is Histone H2B type 1-N of Homo sapiens (Human).